The following is a 122-amino-acid chain: Acidic phospholipase A2 BlatPLA2 (122 aa).

Intrachain disulfides connect C26–C115, C28–C44, C43–C95, C49–C122, C50–C88, C57–C81, and C75–C86. Positions 27, 29, and 31 each coordinate Ca(2+). Residue H47 is part of the active site. D48 contributes to the Ca(2+) binding site. The active site involves D89.

Belongs to the phospholipase A2 family. Group II subfamily. D49 sub-subfamily. In terms of assembly, monomer. Ca(2+) serves as cofactor. As to expression, expressed by the venom gland.

It is found in the secreted. It carries out the reaction a 1,2-diacyl-sn-glycero-3-phosphocholine + H2O = a 1-acyl-sn-glycero-3-phosphocholine + a fatty acid + H(+). Functionally, acidic phospholipase A2 (PLA2) that only causes a mild edema, when subcutaneously injected in the mice foot. PLA2 catalyzes the calcium-dependent hydrolysis of the 2-acyl groups in 3-sn-phosphoglycerides. The chain is Acidic phospholipase A2 BlatPLA2 from Bothriechis lateralis (Side-striped palm pitviper).